We begin with the raw amino-acid sequence, 270 residues long: Catechol 1,2-dioxygenase (270 aa).

4 residues coordinate Fe cation: tyrosine 152, tyrosine 186, histidine 210, and histidine 212.

This sequence belongs to the intradiol ring-cleavage dioxygenase family. The cofactor is Fe(3+).

It catalyses the reaction catechol + O2 = cis,cis-muconate + 2 H(+). In Rhodococcus opacus (Nocardia opaca), this protein is Catechol 1,2-dioxygenase (catA).